Consider the following 350-residue polypeptide: Renin receptor (350 aa).

The first 17 residues, 1-17 (MAVLVVLLFFLVAGALG), serve as a signal peptide directing secretion. Residues 18-302 (NEFSILRSPG…YNLAYKYNLE (285 aa)) lie on the Extracellular side of the membrane. Residues 303–323 (YSVVFNLVLWIMIGLALAVII) form a helical membrane-spanning segment. The Cytoplasmic portion of the chain corresponds to 324–350 (TSYNIWNMDPGYDSIIYRMTNQKIRID). The Mediates retrograde transport to the ER motif lies at 346–350 (KIRID).

Interacts with renin. Accessory component of the multisubunit proton-transporting vacuolar (V)-ATPase protein pump. Interacts (via N-terminus) with ATP6AP1 (via N-terminus). Interacts with ATP6V0D1; ATP6V0D1 is a V-ATPase complex subunit and the interaction promotes V-ATPase complex assembly. Interacts with TMEM9; TMEM9 is a V-ATPase assembly regulator and the interaction induces the interaction with ATP6V0D1. Interacts with VMA21 (via N-terminus); VMA21 is a V-ATPase accessory component. Phosphorylated. Post-translationally, proteolytically cleaved by a furin-like convertase in the trans-Golgi network to generate N- and C-terminal fragments. In terms of tissue distribution, expressed in glutamatergic and GABAergic neurons with highest levels in the cortex, the hippocampus, the medial habenular nucleus, the cerebellum, the medulla and the olfactory bulb (at protein level).

The protein localises to the endoplasmic reticulum membrane. Its subcellular location is the lysosome membrane. The protein resides in the cytoplasmic vesicle. It localises to the autophagosome membrane. It is found in the cell projection. The protein localises to the dendritic spine membrane. Its subcellular location is the axon. The protein resides in the endosome membrane. It localises to the clathrin-coated vesicle membrane. It is found in the secretory vesicle. The protein localises to the synaptic vesicle membrane. Its function is as follows. Multifunctional protein which functions as a renin, prorenin cellular receptor and is involved in the assembly of the lysosomal proton-transporting V-type ATPase (V-ATPase) and the acidification of the endo-lysosomal system. May mediate renin-dependent cellular responses by activating ERK1 and ERK2. By increasing the catalytic efficiency of renin in AGT/angiotensinogen conversion to angiotensin I, may also play a role in the renin-angiotensin system (RAS). Through its function in V-type ATPase (v-ATPase) assembly and acidification of the lysosome it regulates protein degradation and may control different signaling pathways important for proper brain development, synapse morphology and synaptic transmission. In Mus musculus (Mouse), this protein is Renin receptor.